A 1678-amino-acid chain; its full sequence is Anaphase-promoting complex subunit 1 (1678 aa).

PC repeat units follow at residues Ser-1089–Leu-1116, Gly-1156–Ile-1194, Gly-1256–Ala-1293, and Ile-1320–Tyr-1354.

This sequence belongs to the APC1 family. The APC/C is composed of at least 10 subunits.

It localises to the nucleus. It participates in protein modification; protein ubiquitination. Component of the anaphase promoting complex/cyclosome (APC/C), a cell cycle-regulated E3 ubiquitin-protein ligase complex that controls progression through mitosis and the G1 phase of the cell cycle. The APC/C complex controls several key steps in the cell cycle by mediating ubiquitination and subsequent degradation of target proteins such as cyclins. The APC/C complex is required for the female gametophyte development and is involved in several aspect of development by controlling cell division and cell elongation. Involved in the control of endoreduplication. In Arabidopsis thaliana (Mouse-ear cress), this protein is Anaphase-promoting complex subunit 1 (APC1).